A 523-amino-acid chain; its full sequence is Acetyl-CoA hydrolase (523 aa).

Position 277 to 281 (277 to 281) interacts with CoA; sequence GIGNI. Catalysis depends on E302, which acts as the 5-glutamyl coenzyme A thioester intermediate. 2 residues coordinate CoA: N392 and G396.

This sequence belongs to the acetyl-CoA hydrolase/transferase family.

It localises to the cytoplasm. The catalysed reaction is acetyl-CoA + H2O = acetate + CoA + H(+). Functionally, presumably involved in regulating the intracellular acetyl-CoA pool for fatty acid and cholesterol synthesis and fatty acid oxidation. The protein is Acetyl-CoA hydrolase (ACH1) of Eremothecium gossypii (strain ATCC 10895 / CBS 109.51 / FGSC 9923 / NRRL Y-1056) (Yeast).